We begin with the raw amino-acid sequence, 449 residues long: Monoacylglycerol lipase (449 aa).

Residue Lys-82 forms a Glycyl lysine isopeptide (Lys-Gly) (interchain with G-Cter in ubiquitin) linkage. The AB hydrolase-1 domain occupies 151-392; that stretch reads PMLIILHGLT…LLLETSTGGH (242 aa). Positions 230–234 match the GXSXG motif; that stretch reads GFSLG. Ser-232 acts as the Nucleophile in catalysis. Active-site charge relay system residues include Asp-364 and His-392.

This sequence belongs to the AB hydrolase superfamily. AB hydrolase 4 family.

It carries out the reaction Hydrolyzes glycerol monoesters of long-chain fatty acids.. It catalyses the reaction 1-hexadecanoylglycerol + H2O = glycerol + hexadecanoate + H(+). The catalysed reaction is 1-octadecanoylglycerol + H2O = octadecanoate + glycerol + H(+). The enzyme catalyses 1-(9Z-octadecenoyl)-glycerol + H2O = glycerol + (9Z)-octadecenoate + H(+). Its function is as follows. Converts monoacylglycerides (MAG) to free fatty acids and glycerol. Has a preference for palmitoyl-MAG. Does not play a significant role in ethyl ester biosynthesis. Also possesses ester hydrolase and low but persistent TAG lipase activity. The polypeptide is Monoacylglycerol lipase (Saccharomyces cerevisiae (strain ATCC 204508 / S288c) (Baker's yeast)).